The primary structure comprises 279 residues: Phosphatidylglycerol--prolipoprotein diacylglyceryl transferase (279 aa).

7 consecutive transmembrane segments (helical) span residues 14–34, 62–82, 106–126, 136–156, 190–210, 218–238, and 252–272; these read IAFS…ACAI, YFLW…ILIY, FVGI…IASY, LLIY…FGRI, PSQL…VMWA, GLLI…AEFY, and LSMG…ILLY. R155 is an a 1,2-diacyl-sn-glycero-3-phospho-(1'-sn-glycerol) binding site.

It belongs to the Lgt family.

It is found in the cell inner membrane. It catalyses the reaction L-cysteinyl-[prolipoprotein] + a 1,2-diacyl-sn-glycero-3-phospho-(1'-sn-glycerol) = an S-1,2-diacyl-sn-glyceryl-L-cysteinyl-[prolipoprotein] + sn-glycerol 1-phosphate + H(+). It participates in protein modification; lipoprotein biosynthesis (diacylglyceryl transfer). Catalyzes the transfer of the diacylglyceryl group from phosphatidylglycerol to the sulfhydryl group of the N-terminal cysteine of a prolipoprotein, the first step in the formation of mature lipoproteins. The protein is Phosphatidylglycerol--prolipoprotein diacylglyceryl transferase of Helicobacter pylori (strain HPAG1).